The chain runs to 485 residues: Glutamyl-tRNA(Gln) amidotransferase subunit A (485 aa).

Residues Lys-79 and Ser-154 each act as charge relay system in the active site. Ser-178 (acyl-ester intermediate) is an active-site residue.

It belongs to the amidase family. GatA subfamily. In terms of assembly, heterotrimer of A, B and C subunits.

It catalyses the reaction L-glutamyl-tRNA(Gln) + L-glutamine + ATP + H2O = L-glutaminyl-tRNA(Gln) + L-glutamate + ADP + phosphate + H(+). Its function is as follows. Allows the formation of correctly charged Gln-tRNA(Gln) through the transamidation of misacylated Glu-tRNA(Gln) in organisms which lack glutaminyl-tRNA synthetase. The reaction takes place in the presence of glutamine and ATP through an activated gamma-phospho-Glu-tRNA(Gln). The chain is Glutamyl-tRNA(Gln) amidotransferase subunit A from Geobacillus stearothermophilus (Bacillus stearothermophilus).